Reading from the N-terminus, the 161-residue chain is uncharacterized protein (161 aa).

This is an uncharacterized protein from Methanocaldococcus jannaschii (strain ATCC 43067 / DSM 2661 / JAL-1 / JCM 10045 / NBRC 100440) (Methanococcus jannaschii).